The primary structure comprises 540 residues: Chaperonin GroEL 1 (540 aa).

Residues 29-32, 86-90, Gly415, 479-481, and Asp495 contribute to the ATP site; these read TIGP, DGTTT, and NAA.

Belongs to the chaperonin (HSP60) family. In terms of assembly, forms a cylinder of 14 subunits composed of two heptameric rings stacked back-to-back. Interacts with the co-chaperonin GroES.

The protein localises to the cytoplasm. It carries out the reaction ATP + H2O + a folded polypeptide = ADP + phosphate + an unfolded polypeptide.. Functionally, together with its co-chaperonin GroES, plays an essential role in assisting protein folding. The GroEL-GroES system forms a nano-cage that allows encapsulation of the non-native substrate proteins and provides a physical environment optimized to promote and accelerate protein folding. This is Chaperonin GroEL 1 from Streptomyces albus G.